The primary structure comprises 74 residues: Anaphase-promoting complex subunit 13 (74 aa).

Residues 33-56 are disordered; that stretch reads LSELPEPEQDNGGTTESVKEQEMK.

Belongs to the APC13 family. As to quaternary structure, the mammalian APC/C is composed at least of 14 distinct subunits ANAPC1, ANAPC2, CDC27/APC3, ANAPC4, ANAPC5, CDC16/APC6, ANAPC7, CDC23/APC8, ANAPC10, ANAPC11, CDC26/APC12, ANAPC13, ANAPC15 and ANAPC16 that assemble into a complex of at least 19 chains with a combined molecular mass of around 1.2 MDa; APC/C interacts with FZR1 and FBXO5.

Its subcellular location is the nucleus. The protein operates within protein modification; protein ubiquitination. Component of the anaphase promoting complex/cyclosome (APC/C), a cell cycle-regulated E3 ubiquitin ligase that controls progression through mitosis and the G1 phase of the cell cycle. The APC/C complex acts by mediating ubiquitination and subsequent degradation of target proteins: it mainly mediates the formation of 'Lys-11'-linked polyubiquitin chains and, to a lower extent, the formation of 'Lys-48'- and 'Lys-63'-linked polyubiquitin chains. The APC/C complex catalyzes assembly of branched 'Lys-11'-/'Lys-48'-linked branched ubiquitin chains on target proteins. The polypeptide is Anaphase-promoting complex subunit 13 (Anapc13) (Mus musculus (Mouse)).